The chain runs to 396 residues: Ribosomal RNA large subunit methyltransferase I (396 aa).

Residues 2 to 79 (SVFIYLVKGR…KEETVDLDFF (78 aa)) enclose the PUA domain.

Belongs to the methyltransferase superfamily. RlmI family.

It is found in the cytoplasm. It carries out the reaction cytidine(1962) in 23S rRNA + S-adenosyl-L-methionine = 5-methylcytidine(1962) in 23S rRNA + S-adenosyl-L-homocysteine + H(+). Functionally, specifically methylates the cytosine at position 1962 (m5C1962) of 23S rRNA. This is Ribosomal RNA large subunit methyltransferase I from Aeromonas salmonicida (strain A449).